The sequence spans 162 residues: Peptidyl-prolyl cis-trans isomerase-like 1 (162 aa).

The 155-residue stretch at 1–155 (MATDVTFDTS…DEVKILRAKV (155 aa)) folds into the PPIase cyclophilin-type domain.

The protein belongs to the cyclophilin-type PPIase family. PPIL1 subfamily.

It catalyses the reaction [protein]-peptidylproline (omega=180) = [protein]-peptidylproline (omega=0). PPIases accelerate the folding of proteins. It catalyzes the cis-trans isomerization of proline imidic peptide bonds in oligopeptides. The sequence is that of Peptidyl-prolyl cis-trans isomerase-like 1 (cyp1) from Emericella nidulans (strain FGSC A4 / ATCC 38163 / CBS 112.46 / NRRL 194 / M139) (Aspergillus nidulans).